Reading from the N-terminus, the 579-residue chain is Amino acid transporter 1 (579 aa).

Over 1–83 (MSAKDYDFDI…KRGLSTRHMQ (83 aa)) the chain is Cytoplasmic. Residues 84 to 104 (LMSIGGAIGSGLYVGSGSALA) traverse the membrane as a helical segment. Residues 105-108 (DGGP) lie on the Extracellular side of the membrane. Residues 109 to 129 (ASVIINYILIGIMMFFVIYAL) traverse the membrane as a helical segment. The Cytoplasmic segment spans residues 130–161 (GEMAVAYPVAGSFNTYATRFIDPAWGFAVSWN). Residues 162–184 (YFFNYFVTFPFELTTCAITFTFW) traverse the membrane as a helical segment. At 185–186 (TD) the chain is on the extracellular side. A helical membrane pass occupies residues 187 to 207 (VNCAVWISIFLVVVIGINLFG). Topologically, residues 208–215 (VRVFGEVE) are cytoplasmic. The helical transmembrane segment at 216 to 236 (FVLALIKVVATVGFIILAIII) threads the bilayer. Over 237–265 (NCGGVPTDHRGYIGGSIIKQKPFRHGFKG) the chain is Extracellular. A helical membrane pass occupies residues 266–286 (FCSVYTTAAFSFSGTEIVGLA). At 287–303 (AAEVGDPRKTLPGAVKQ) the chain is on the cytoplasmic side. A helical transmembrane segment spans residues 304 to 324 (VFWRVAIFYIVSLILIGLLIS). Residues 325–347 (PDDPKLMGNGSASVSPFVLAIQE) lie on the Extracellular side of the membrane. Residues 348–368 (ANIKGLPSVFNAVIIISVISV) traverse the membrane as a helical segment. Topologically, residues 369–401 (TNSSTYTAGRTLHGMANLKQAPAFFKYTDRLGR) are cytoplasmic. Residues 402 to 422 (PLIAMIVVLSFGFFAYINEAN) form a helical membrane-spanning segment. Over 423-431 (NNGNDISDT) the chain is Extracellular. The chain crosses the membrane as a helical span at residues 432–452 (VFDWLLAISGLSNFFTWGSIC). At 453 to 471 (LSHIMFRLAFKKQGHSLKE) the chain is on the cytoplasmic side. Residues 472–492 (LGFVSPMGIWGSVIGLGFNIL) form a helical membrane-spanning segment. Residues 493-513 (CLMAEFYVSLFPIGGSPNAND) lie on the Extracellular side of the membrane. The helical transmembrane segment at 514 to 534 (FFQGYLAACITLVFFIGYKIY) threads the bilayer. The Cytoplasmic portion of the chain corresponds to 535-579 (DRSHIPSLDKLDITTGLKTYEYEETKDSSDTGRFRFFKKIINTVC).

The protein belongs to the amino acid-polyamine-organocation (APC) superfamily.

Its subcellular location is the golgi apparatus membrane. The protein resides in the cell membrane. Functionally, probable amino acid transporter that may play a role in function in microtubule organization since it causes microtubule defects when overexpressed. The polypeptide is Amino acid transporter 1 (aat1) (Schizosaccharomyces pombe (strain 972 / ATCC 24843) (Fission yeast)).